Consider the following 1132-residue polypeptide: MSAKKPVQSKLNIGNPTIPVTSNRSTAPKPVPGQPQFVNQEKKQQSQNTTTGAFRSNQNNANSGGNGNFELDDLHLALKSCNEIGSAKTLFCFFMELQKINDKIPSKKNTELIKNDPQFQYFCHNTILCTEQSYDEKTIEKLAKLEYKLEYKNSYIDMISKVIKELLIENKLNKLQTFGYKLVNNEFGNQNHLGMMQQNQDSSHNSNFMVKCDYINLNKQCMITKNWEKVYFYLGDHLFMHIYKEYMIFLKTRDESLVQISGTNIFCYLNEKLGRLQAAFYEGPNKNAANSAAQGSNPEANDLISAEQRKINTAIVMKKTHKYNIKAADESYLTNQEKGFWDDQIKRNRLFYCAHQNRFFQKHILNSKTLSQQQIRDNIYKEVFGFNRVRAELKGKVMSIIEQVIVNQKKFDFKYYLSKNCPLPENWKNLKKSFLEDAAVSGELRGQVFRQLFEYQQDQRQISNFLTEFVANVFPKNFLEGKNKKIFNKKMLQFVKFNRFESFTKISLLNKFRVNEVSWLSFKCKDENKKFFMNENEHVFFKVLKWVFEDLAITLMRCYFYSTEKAKEYQRIFYYRKNIWNMIMRLSIDDLLKQNLKQVEKKEMRIFCESQNFAPGKLRLIPKGDTFRPIMTFNRKIPNQVGKFQSRMTTNNKLQTAHMMLKNLKSKMFKHSFGFAVFNYDDIMKRYENFVQKWKQINSPKLYFVAMDIEKCYDNVDCERVVNFLQKSDLMDKEYFILNTFVLKRKNNIIVERSNFRKLPIKQYFRYKFQKIGIDGSSYPTLFEILEDEFNDLNMKRTIIVEQEQRKKFPKNDLLQPVLKICQNNYVTFNKKQYKQMKGIPQGLCVSYILSSFYYANLEENALQFLRKESMDPEKPEINLLMRLTDDYLLMTTEKNNAMLFIEKLYQLSLGNFFKFHMKKLKTNFALNLQKIGCTNTTQDIDSINDDLFHWIGISIDIKTLNIIQNINIKKEGILCTLNVNMQTNESILWLKKKLKSFLMNNISFYFKSTINTKQFANITLSKLYIAAAEKYVACCQEFKRFHENTSLGGQNIDIKIIHIIYVVIRSFFKYLVCNVKSPVFERDDYQQFFIYSLKFFITRFKQQKNEFAGVYKILKAKEKKLEVAKIEFQIQ.

Positions Met1–Asn66 are disordered. Polar residues-rich tracts occupy residues Ser9–Thr26 and Gln45–Arg55. The 355-residue stretch at Lys602–Ile956 folds into the Reverse transcriptase domain. Asp708, Asp886, and Asp887 together coordinate Mg(2+).

This sequence belongs to the reverse transcriptase family. Telomerase subfamily.

Its subcellular location is the nucleus. The protein localises to the chromosome. It is found in the telomere. It carries out the reaction DNA(n) + a 2'-deoxyribonucleoside 5'-triphosphate = DNA(n+1) + diphosphate. Its function is as follows. Telomerase is a ribonucleoprotein enzyme essential for the replication of chromosome termini in most eukaryotes. It elongates telomeres. It is a reverse transcriptase that adds simple sequence repeats to chromosome ends by copying a template sequence within the RNA component of the enzyme. In Oxytricha trifallax (Sterkiella histriomuscorum), this protein is Telomerase reverse transcriptase (TERT).